The chain runs to 139 residues: Acidic phospholipase A2 S1E6-c (139 aa).

The N-terminal stretch at 1-16 is a signal peptide; it reads MRTLWILAVLLVGVEG. Cystine bridges form between C42–C132, C44–C60, C59–C111, C65–C139, C66–C104, C73–C97, and C91–C102. Residues Y43, G45, and G47 each coordinate Ca(2+). H63 is an active-site residue. D64 is a binding site for Ca(2+). The active site involves D105.

Belongs to the phospholipase A2 family. Group II subfamily. D49 sub-subfamily. As to quaternary structure, homodimer. Requires Ca(2+) as cofactor. Expressed by the venom gland.

The protein resides in the secreted. The enzyme catalyses a 1,2-diacyl-sn-glycero-3-phosphocholine + H2O = a 1-acyl-sn-glycero-3-phosphocholine + a fatty acid + H(+). Snake venom phospholipase A2 (PLA2) that inhibits ADP-induced platelet aggregation. PLA2 catalyzes the calcium-dependent hydrolysis of the 2-acyl groups in 3-sn-phosphoglycerides. This is Acidic phospholipase A2 S1E6-c from Calloselasma rhodostoma (Malayan pit viper).